Consider the following 286-residue polypeptide: Probable endonuclease 4 (286 aa).

Zn(2+)-binding residues include H67, H107, E146, D180, H183, H217, D230, H232, and E262.

Belongs to the AP endonuclease 2 family. Zn(2+) serves as cofactor.

The enzyme catalyses Endonucleolytic cleavage to 5'-phosphooligonucleotide end-products.. Endonuclease IV plays a role in DNA repair. It cleaves phosphodiester bonds at apurinic or apyrimidinic (AP) sites, generating a 3'-hydroxyl group and a 5'-terminal sugar phosphate. The protein is Probable endonuclease 4 of Methanosphaerula palustris (strain ATCC BAA-1556 / DSM 19958 / E1-9c).